Here is a 489-residue protein sequence, read N- to C-terminus: Endothelial zinc finger protein induced by tumor necrosis factor alpha (489 aa).

Basic and acidic residues predominate over residues 1–15 (MKELDPKNDISEDKL). Disordered regions lie at residues 1–61 (MKEL…PLGI) and 98–122 (EKGA…KPPM). 13 C2H2-type zinc fingers span residues 130–152 (YDCS…QRIH), 158–180 (FECD…QRVH), 186–208 (YACG…QRTH), 214–236 (YVCD…ERIH), 242–264 (YACG…QRTH), 270–292 (YVCP…QRTH), 298–320 (YACK…QRNH), 326–348 (YVCG…QRFH), 354–376 (FECS…QRIH), 382–404 (YECY…QIVH), 410–432 (YVCG…QRIH), 438–460 (YRCG…QRIH), and 466–488 (YRCG…LRIH).

It belongs to the krueppel C2H2-type zinc-finger protein family. Highly expressed in placenta, followed by brain, testis, pancreas, heart, small intestine, muscle, uterus, prostate and peripheral blood leukocytes. Not detected in liver, lung, colon, stomach, salivary and thyroid gland.

The protein resides in the nucleus. May be involved in transcriptional regulation. This is Endothelial zinc finger protein induced by tumor necrosis factor alpha (ZNF71) from Homo sapiens (Human).